Consider the following 837-residue polypeptide: Tuftelin-interacting protein 11 (837 aa).

Basic and acidic residues predominate over residues 1–13 (MSLSHLYRDGEGH). Disordered regions lie at residues 1–31 (MSLS…DWDL), 54–73 (WAER…RARD), and 85–133 (LKKG…KGFA). The segment at 1–50 (MSLSHLYRDGEGHMDDDDDERENFEITDWDLQNEFNPNRQRHWQTKEEAT) is required for interaction with DHX15. Serine 2 is modified (phosphoserine). The segment covering 14-28 (MDDDDDERENFEITD) has biased composition (acidic residues). The span at 54-64 (WAERDSDEERP) shows a compositional bias: basic and acidic residues. Serine 59 and serine 98 each carry phosphoserine. Residues 91–102 (EEAELEDSEDEE) are compositionally biased toward acidic residues. Over residues 103-116 (KPVKQDDFPKDFGP) the composition is skewed to basic and acidic residues. The residue at position 144 (serine 144) is a Phosphoserine. The G-patch domain occupies 149–195 (TKGIGQKLLQKMGYVPGRGLGKNAQGIINPIEAKQRKGKGAVGAYGS). Disordered regions lie at residues 183-236 (QRKG…KKKP) and 289-312 (HNVP…EAKA). Serine 210 carries the phosphoserine modification. The span at 217–231 (EFQKELSQWRKDPSG) shows a compositional bias: basic and acidic residues. The short motif at 700 to 705 (VKDKFN) is the Nuclear localization signal element. A required for nuclear speckle localization region spans residues 710–734 (IMNRAVSSNVGAYMQPGARENIAYL).

It belongs to the TFP11/STIP family. In terms of assembly, identified in the spliceosome C complex. Found in the Intron Large (IL) complex, a post-mRNA release spliceosomal complex containing the excised intron, U2, U5 and U6 snRNPs, and splicing factors. Interacts with TUFT1. Interacts with DHX15; indicative for a recruitment of DHX15 to the IL complex. Interacts with GCFC2.

It localises to the cytoplasm. Its subcellular location is the nucleus. Functionally, involved in pre-mRNA splicing, specifically in spliceosome disassembly during late-stage splicing events. Intron turnover seems to proceed through reactions in two lariat-intron associated complexes termed Intron Large (IL) and Intron Small (IS). In cooperation with DHX15 seems to mediate the transition of the U2, U5 and U6 snRNP-containing IL complex to the snRNP-free IS complex leading to efficient debranching and turnover of excised introns. May play a role in the differentiation of ameloblasts and odontoblasts or in the forming of the enamel extracellular matrix. This chain is Tuftelin-interacting protein 11 (TFIP11), found in Canis lupus familiaris (Dog).